The sequence spans 147 residues: Myoglobin (147 aa).

Alanine 2 bears the N-acetylalanine mark. In terms of domain architecture, Globin spans 2–141 (ADFDAVLKCW…IIADLEANYK (140 aa)). Histidine 60 contributes to the nitrite binding site. Histidine 60 contacts O2. Histidine 89 is a binding site for heme b.

Belongs to the globin family. As to quaternary structure, monomeric.

Its subcellular location is the cytoplasm. The protein localises to the sarcoplasm. The catalysed reaction is Fe(III)-heme b-[protein] + nitric oxide + H2O = Fe(II)-heme b-[protein] + nitrite + 2 H(+). It catalyses the reaction H2O2 + AH2 = A + 2 H2O. Its function is as follows. Monomeric heme protein which primary function is to store oxygen and facilitate its diffusion within muscle tissues. Reversibly binds oxygen through a pentacoordinated heme iron and enables its timely and efficient release as needed during periods of heightened demand. Depending on the oxidative conditions of tissues and cells, and in addition to its ability to bind oxygen, it also has a nitrite reductase activity whereby it regulates the production of bioactive nitric oxide. Under stress conditions, like hypoxia and anoxia, it also protects cells against reactive oxygen species thanks to its pseudoperoxidase activity. This is Myoglobin (mb) from Thunnus albacares (Yellowfin tuna).